Consider the following 27-residue polypeptide: HSDGLFTSEYSKMRGNAQVQKFIQNLM.

M27 carries the methionine amide modification.

The protein belongs to the glucagon family.

The protein localises to the secreted. In terms of biological role, hormone involved in different processes, such as regulation of the pH of the duodenal content, food intake and water homeostasis. Exerts its biological effects by binding to secretin receptor (SCTR), a G-protein coupled receptor expressed in the basolateral domain of several cells. The chain is Secretin from Gallus gallus (Chicken).